The primary structure comprises 171 residues: 3-hydroxyanthranilate 3,4-dioxygenase (171 aa).

An O2-binding site is contributed by Arg44. 3 residues coordinate Fe cation: His48, Glu54, and His92. Glu54 serves as a coordination point for substrate. Substrate-binding residues include Arg96 and Glu106. A divalent metal cation-binding residues include Cys121, Cys126, Cys160, and Cys163.

Belongs to the 3-HAO family. Fe(2+) serves as cofactor.

The protein localises to the cytoplasm. It catalyses the reaction 3-hydroxyanthranilate + O2 = (2Z,4Z)-2-amino-3-carboxymuconate 6-semialdehyde. It functions in the pathway cofactor biosynthesis; NAD(+) biosynthesis; quinolinate from L-kynurenine: step 3/3. Catalyzes the oxidative ring opening of 3-hydroxyanthranilate to 2-amino-3-carboxymuconate semialdehyde, which spontaneously cyclizes to quinolinate. The chain is 3-hydroxyanthranilate 3,4-dioxygenase from Yarrowia lipolytica (strain CLIB 122 / E 150) (Yeast).